The primary structure comprises 470 residues: Argininosuccinate lyase (470 aa).

This sequence belongs to the lyase 1 family. Argininosuccinate lyase subfamily.

The protein resides in the cytoplasm. The catalysed reaction is 2-(N(omega)-L-arginino)succinate = fumarate + L-arginine. It functions in the pathway amino-acid biosynthesis; L-arginine biosynthesis; L-arginine from L-ornithine and carbamoyl phosphate: step 3/3. The chain is Argininosuccinate lyase from Leptospira interrogans serogroup Icterohaemorrhagiae serovar copenhageni (strain Fiocruz L1-130).